The sequence spans 160 residues: MNPTVSIAVILTVLQAAHCQMIRDLSACLLGQSLRVDCRYENKTSNPLTYEFSLTRQQKHIIQSTISVSENVYRNRANVTMHKNLVCLYLHSFTTSDEGVYMCELKATNDYTGNQIKNITVIKDKLEKCVRLSLLIQNTSWLLLLLLSLPLLQAVDFVSL.

An N-terminal signal peptide occupies residues 1–19 (MNPTVSIAVILTVLQAAHC). A Pyrrolidone carboxylic acid modification is found at Gln20. Positions 20–120 (QMIRDLSACL…YTGNQIKNIT (101 aa)) constitute an Ig-like V-type domain. Cystine bridges form between Cys28–Cys129 and Cys38–Cys103. N-linked (GlcNAc...) asparagine glycans are attached at residues Asn42, Asn78, and Asn118. Cys129 carries the GPI-anchor amidated cysteine lipid modification. A propeptide spans 130-160 (VRLSLLIQNTSWLLLLLLSLPLLQAVDFVSL) (removed in mature form). N-linked (GlcNAc...) asparagine glycosylation occurs at Asn138.

In terms of processing, the N-terminus is blocked. As to expression, forebrain, cerebellum and tectum.

The protein localises to the cell membrane. Its function is as follows. May play a role in cell-cell or cell-ligand interactions during synaptogenesis and other events in the brain. This is Thy-1 membrane glycoprotein (THY1) from Gallus gallus (Chicken).